Here is a 442-residue protein sequence, read N- to C-terminus: MSLNDFLQTLSNAVGEKNSNTLEKCIILDPSEPSFQQLSKTLFLDRKGKNKLNGTIQKEFGRIRGWKELVTTYFEYVENAASSPDQRKWELLQNLYSNLTTCFSHIDGAWLCTIVKRVSKLYVKLSLQLDTSTPTLEDSFDGNGFIQRKYVSDASRNVLRTFNSILSDRQQNINPSKKDAIFCIANLLCLLYFRLKQIRLCQTIQANVISSGADISRATMAELVTFRYYLGRCHLYQRKIHQAKDHLLFSFLQCPDECYHQKRLSLIYLTTCLLILGKSPTKGLLEKYKLTAAFEPLIKALKSGDIKSFRLSLEDNSRRKWFIKRGIYLTLLDRCEIILWRNLFRKVFLFTFEQSQKTPHVSGSYLLTAARLSTNDNSYDMDDVECICVSLIDQGYIKGYIIHASSTLVLKKDPSFGFSVIESLMPIARNDHAEKEFFHANA.

In terms of domain architecture, PCI spans 224–415 (VTFRYYLGRC…STLVLKKDPS (192 aa)).

The protein localises to the cytoplasm. The protein resides in the nucleus envelope. The protein is PCI domain-containing protein C1105.07c of Schizosaccharomyces pombe (strain 972 / ATCC 24843) (Fission yeast).